Consider the following 511-residue polypeptide: MAGLSDLELRRELQALGFQPGPITDTTRNVYRNKLRRLRGEARLRDDERLREDAGPREDAGPRGPERQREEARLREEAPLRARPAASVLRSEPWPLSPSPPAPSAASDASGPYGNFGASASPWAASRGLSYPPHAGPGPLRRRASVRGSSEDDEDTRTPDRHAPGRGRHWWAPPSASARPHSALLGADARPGLKGSRTGSAGAGRTRPEVGRWLERCLSRLLLWASLGLLLGFLAILWVKMGKPSAPQEAEDNMKLLPVDCERKTDEFCQAKQKAALLELLHELYNFLAIQAGNFECGNPEKLKSKCIPVLEAQEYIANVTSSPSSRFKAALTWILSSNKDVGIWLKGEDPSELATTVDKVVCLESARPRMGIGCRLSRALLTAVTHVLIFFWCLAFLWGLLILLKYRWRKLEEEEQAMYEMVKKIIDVVQDHYVDWEQDMERYPYVGILHVRDSLIPPQSRRRMKRVWDRAVEFLASNESRIQTESHRVAGEDMLVWRWTKPSSFSDSER.

An N-acetylalanine modification is found at Ala2. The LEM domain occupies Ala2–Ala42. Disordered regions lie at residues Phe18–Ser110 and Gly128–Thr206. Over residues Leu38–Leu80 the composition is skewed to basic and acidic residues. The interaction with lamin A/C complexes stretch occupies residues Leu80–Pro112. The required for nuclear retention and interaction with LMNA isoform C stretch occupies residues Leu80 to Arg141. 2 stretches are compositionally biased toward low complexity: residues Arg81 to Trp94 and Ala172 to Ala183. 2 consecutive transmembrane segments (helical) span residues Leu221–Met241 and Val385–Leu405. A winged-Helix (WH) region spans residues Ile403–Arg511. Phosphoserine is present on residues Ser505, Ser507, and Ser509.

Interacts (via N-terminus) with LMNA isoform C (via C-terminus) (in vitro). Interacts (via LEM domain) with BANF1. Interacts (via C-terminus) with CHMP7. Interacts (via N-terminus) with tubulin; the interaction causes microtubule bundling and stabilization (in vitro). Phosphorylated; strongly phosphorylated in mitosis compared to G1/S. Ubiquitously expressed, including liver, brain, heart, skeletal muscle, lung, testis, spleen, kidney and white adipose tissue.

It localises to the nucleus inner membrane. The protein localises to the nucleus envelope. Its subcellular location is the cytoplasm. The protein resides in the cytoskeleton. It is found in the spindle. In terms of biological role, nuclear lamina-associated inner nuclear membrane protein that is involved in nuclear structure organization and maintenance of nuclear envelope (NE) integrity and NE reformation after mitosis. Plays a role as transmembrane adapter for the endosomal sorting complexes required for transport (ESCRT), and is thereby involved in ESCRT-mediated NE reformation. Promotes ESCRT-mediated NE closure by recruiting CHMP7 and downstream ESCRT-III proteins IST1/CHMP8 and CHMP2A to the reforming NE during anaphase. During nuclear reassembly, condenses into a liquid-like coating around microtubule spindles and coassembles with CHMP7 to form a macromolecular O-ring seal at the confluence between membranes, chromatin, and the spindle to facilitate early nuclear sealing. Plays a role in the organization of heterochromatin associated with the NE and in the maintenance of NE organization under mechanical stress. Required for embryonic development and is involved in regulation of several signaling pathways such as MAPK and AKT. Required for myoblast differentiation involving regulation of ERK signaling. Essential for cardiac homeostasis and proper heart function. In Mus musculus (Mouse), this protein is LEM domain-containing protein 2 (Lemd2).